A 243-amino-acid chain; its full sequence is Linker for activation of T-cells family member 2 (243 aa).

Over M1 to T5 the chain is Extracellular. Residues E6–V26 form a helical; Signal-anchor for type III membrane protein membrane-spanning segment. Residues C25 and C28 are each lipidated (S-palmitoyl cysteine). Residues R27–A243 lie on the Cytoplasmic side of the membrane. Position 44 is a phosphoserine (S44). The residue at position 58 (Y58) is a Phosphotyrosine. Residues S59 and S92 each carry the phosphoserine modification. Phosphotyrosine is present on residues Y136, Y193, and Y233. The tract at residues P174–A243 is disordered.

When phosphorylated, interacts with GRB2. May also interact with SOS1, GAB1 and CBL. In terms of processing, phosphorylated on tyrosines following cross-linking of BCR in B-cells, FCGR1 in myeloid cells, or FCER1 in mast cells; which induces the recruitment of GRB2. Post-translationally, may be polyubiquitinated. In terms of tissue distribution, highly expressed in spleen, peripheral blood lymphocytes, and germinal centers of lymph nodes. Also expressed in placenta, lung, pancreas and small intestine. Present in B-cells, NK cells and monocytes. Absent from T-cells (at protein level).

Its subcellular location is the cell membrane. Involved in FCER1 (high affinity immunoglobulin epsilon receptor)-mediated signaling in mast cells. May also be involved in BCR (B-cell antigen receptor)-mediated signaling in B-cells and FCGR1 (high affinity immunoglobulin gamma Fc receptor I)-mediated signaling in myeloid cells. Couples activation of these receptors and their associated kinases with distal intracellular events through the recruitment of GRB2. This Homo sapiens (Human) protein is Linker for activation of T-cells family member 2 (LAT2).